The sequence spans 82 residues: UPF0335 protein pRhico085 (82 aa).

It belongs to the UPF0335 family.

The protein is UPF0335 protein pRhico085 of Azospirillum brasilense.